A 285-amino-acid polypeptide reads, in one-letter code: Shikimate dehydrogenase (NADP(+)) (285 aa).

Residues 22–24 (SMS) and threonine 69 each bind shikimate. The active-site Proton acceptor is the lysine 73. Aspartate 85 contributes to the NADP(+) binding site. Residues asparagine 94 and aspartate 110 each contribute to the shikimate site. NADP(+)-binding positions include 136-140 (GAGGA), 160-165 (NRTVAR), and methionine 225. Tyrosine 227 lines the shikimate pocket. Glycine 248 contacts NADP(+).

It belongs to the shikimate dehydrogenase family. In terms of assembly, homodimer.

The catalysed reaction is shikimate + NADP(+) = 3-dehydroshikimate + NADPH + H(+). It participates in metabolic intermediate biosynthesis; chorismate biosynthesis; chorismate from D-erythrose 4-phosphate and phosphoenolpyruvate: step 4/7. Involved in the biosynthesis of the chorismate, which leads to the biosynthesis of aromatic amino acids. Catalyzes the reversible NADPH linked reduction of 3-dehydroshikimate (DHSA) to yield shikimate (SA). This chain is Shikimate dehydrogenase (NADP(+)), found in Caulobacter vibrioides (strain ATCC 19089 / CIP 103742 / CB 15) (Caulobacter crescentus).